A 73-amino-acid chain; its full sequence is RNA-binding protein Hfq (73 aa).

In terms of domain architecture, Sm spans 8–68 (DQFLNQIRKE…ISTFAPQKNV (61 aa)).

Belongs to the Hfq family. Homohexamer.

Functionally, RNA chaperone that binds small regulatory RNA (sRNAs) and mRNAs to facilitate mRNA translational regulation in response to envelope stress, environmental stress and changes in metabolite concentrations. Also binds with high specificity to tRNAs. The sequence is that of RNA-binding protein Hfq from Bacillus licheniformis (strain ATCC 14580 / DSM 13 / JCM 2505 / CCUG 7422 / NBRC 12200 / NCIMB 9375 / NCTC 10341 / NRRL NRS-1264 / Gibson 46).